The primary structure comprises 208 residues: Glycerol-3-phosphate acyltransferase (208 aa).

6 helical membrane-spanning segments follow: residues 7–27, 63–83, 86–106, 123–143, 149–169, and 170–190; these read PNIH…GYLL, MMAA…ILVA, AGMS…GHCF, GVMA…WLVV, ISSL…FLIH, and PEIP…VIFY.

This sequence belongs to the PlsY family. As to quaternary structure, probably interacts with PlsX.

It is found in the cell inner membrane. It catalyses the reaction an acyl phosphate + sn-glycerol 3-phosphate = a 1-acyl-sn-glycero-3-phosphate + phosphate. It participates in lipid metabolism; phospholipid metabolism. Functionally, catalyzes the transfer of an acyl group from acyl-phosphate (acyl-PO(4)) to glycerol-3-phosphate (G3P) to form lysophosphatidic acid (LPA). This enzyme utilizes acyl-phosphate as fatty acyl donor, but not acyl-CoA or acyl-ACP. This Wolinella succinogenes (strain ATCC 29543 / DSM 1740 / CCUG 13145 / JCM 31913 / LMG 7466 / NCTC 11488 / FDC 602W) (Vibrio succinogenes) protein is Glycerol-3-phosphate acyltransferase.